The primary structure comprises 562 residues: Putative transport protein ECA2683 (562 aa).

6 consecutive transmembrane segments (helical) span residues leucine 8 to glycine 28, leucine 32 to glutamine 52, phenylalanine 66 to phenylalanine 86, phenylalanine 93 to leucine 113, tryptophan 116 to valine 136, and histidine 158 to alanine 178. RCK C-terminal domains follow at residues leucine 202–aspartate 288 and lysine 290–phenylalanine 373. The next 5 helical transmembrane spans lie at leucine 383 to phenylalanine 403, phenylalanine 406 to leucine 426, phenylalanine 447 to serine 467, serine 478 to leucine 498, and glycine 537 to tryptophan 557.

Belongs to the AAE transporter (TC 2.A.81) family. YbjL subfamily.

It localises to the cell membrane. This Pectobacterium atrosepticum (strain SCRI 1043 / ATCC BAA-672) (Erwinia carotovora subsp. atroseptica) protein is Putative transport protein ECA2683.